A 518-amino-acid polypeptide reads, in one-letter code: MFS-type transporter cnsO (518 aa).

Residues 1–13 show a composition bias toward polar residues; sequence MESTDSSPPLSMT. A disordered region spans residues 1-24; sequence MESTDSSPPLSMTDTEKKGDAVTT. 9 consecutive transmembrane segments (helical) span residues 99–119, 122–142, 156–176, 187–207, 221–241, 298–318, 334–354, 362–382, and 392–412; these read LALMYFFFTYGLSEPVSNIML, VGPKIWFPFIVCAWGLITTLT, LMLGITEAGLYPGAYFILSMW, AIFYGANTTAGAFGGVIAYGV, WLFLIEGCITIFAGLACLFCL, FMMMLFWWGGSVPTYSLSYTL, VMTTPPYIFATCVCVAVGYIS, LCIMGAYTLGLIGIIILWITV, and YFAIFLAAAGYSAQAPIVGAW. N416 is a glycosylation site (N-linked (GlcNAc...) asparagine). A run of 2 helical transmembrane segments spans residues 427–447 and 455–475; these read IGLLMLLGSVGGGSIGSNIYI and PLGFGFSVGATVLGAMIPATI.

It belongs to the major facilitator superfamily.

It localises to the cell membrane. Functionally, MFS-type transporter; part of the gene cluster that mediates the biosynthesis of communesins, a prominent class of indole alkaloids with great potential as pharmaceuticals. With the MFS transporter cnsL, is most likely responsible for cummunesins secretion and thereby may contribute to intrinsic resistance. The sequence is that of MFS-type transporter cnsO from Penicillium expansum (Blue mold rot fungus).